Here is a 648-residue protein sequence, read N- to C-terminus: Bifunctional protein TilS/HprT (648 aa).

Residue 29-34 coordinates ATP; that stretch reads SGGPDS. Aspartate 627 is a binding site for Mg(2+).

The protein in the N-terminal section; belongs to the tRNA(Ile)-lysidine synthase family. In the C-terminal section; belongs to the purine/pyrimidine phosphoribosyltransferase family. Mg(2+) serves as cofactor.

It localises to the cytoplasm. It catalyses the reaction IMP + diphosphate = hypoxanthine + 5-phospho-alpha-D-ribose 1-diphosphate. The enzyme catalyses GMP + diphosphate = guanine + 5-phospho-alpha-D-ribose 1-diphosphate. The catalysed reaction is cytidine(34) in tRNA(Ile2) + L-lysine + ATP = lysidine(34) in tRNA(Ile2) + AMP + diphosphate + H(+). In terms of biological role, ligates lysine onto the cytidine present at position 34 of the AUA codon-specific tRNA(Ile) that contains the anticodon CAU, in an ATP-dependent manner. Cytidine is converted to lysidine, thus changing the amino acid specificity of the tRNA from methionine to isoleucine. In Listeria monocytogenes serovar 1/2a (strain ATCC BAA-679 / EGD-e), this protein is Bifunctional protein TilS/HprT (tilS/hprT).